The sequence spans 81 residues: UPF0298 protein SAK_1599 (81 aa).

Belongs to the UPF0298 family.

It is found in the cytoplasm. The chain is UPF0298 protein SAK_1599 from Streptococcus agalactiae serotype Ia (strain ATCC 27591 / A909 / CDC SS700).